A 457-amino-acid chain; its full sequence is Putative hexose transporter 12 (457 aa).

At 1–2 the chain is on the cytoplasmic side; it reads MG. Residues 3–23 form a helical membrane-spanning segment; it reads LIVSIFNIGCAIGGIVLSKVG. Topologically, residues 24–29 are extracellular; sequence DIYGRR. A helical transmembrane segment spans residues 30–50; it reads IGLITVTAIYVVGILIQITSI. The Cytoplasmic portion of the chain corresponds to 51–60; that stretch reads NKWYQYFIGR. A helical transmembrane segment spans residues 61–81; sequence IISGIGVGGIAVLSPMLISEV. Topologically, residues 82–87 are extracellular; that stretch reads APKHIR. Residues 88-108 traverse the membrane as a helical segment; the sequence is GTLVQLYQLMGTMGIFLGYCT. At 109–122 the chain is on the cytoplasmic side; it reads NYGTKNYHNATQWR. Residues 123–143 traverse the membrane as a helical segment; the sequence is VGLGLCFAWATFMVSGMMFVP. Residues 144 to 247 lie on the Extracellular side of the membrane; that stretch reads ESPRYLIEVG…KSVGLKDSFQ (104 aa). Asn194 carries an N-linked (GlcNAc...) asparagine glycan. A helical transmembrane segment spans residues 248-268; that stretch reads TSIIIGVVNFFSSFIAVYTIE. Topologically, residues 269–274 are cytoplasmic; sequence RFGRRT. A helical membrane pass occupies residues 275–295; the sequence is CLLWGAASMLCCFAVFASVGV. The Extracellular portion of the chain corresponds to 296–319; the sequence is TKLWPQGSSHQDITSQGAGNCMIV. A helical membrane pass occupies residues 320–340; it reads FTMFFIFSFATTWAGGCFVIV. The Cytoplasmic segment spans residues 341-353; that stretch reads SETFPLRAKSRGM. Residues 354 to 374 form a helical membrane-spanning segment; it reads AIATAANWMWGFLISFFTPFI. Topologically, residues 375 to 379 are extracellular; the sequence is TGAIN. A helical transmembrane segment spans residues 380–400; that stretch reads FYYGYVFLGCLVFAYFYVFFF. Residues 401–457 lie on the Cytoplasmic side of the membrane; it reads VPETKGLTLEEVNTMWLEGVPAWKSASWVPPERRTADYDADAIDHDNRPIYKRFFSS.

It belongs to the major facilitator superfamily. Sugar transporter (TC 2.A.1.1) family.

It localises to the membrane. Probable glucose transporter. This Saccharomyces cerevisiae (strain ATCC 204508 / S288c) (Baker's yeast) protein is Putative hexose transporter 12 (HXT12).